We begin with the raw amino-acid sequence, 175 residues long: Large ribosomal subunit protein uL10 (175 aa).

This sequence belongs to the universal ribosomal protein uL10 family. Part of the ribosomal stalk of the 50S ribosomal subunit. The N-terminus interacts with L11 and the large rRNA to form the base of the stalk. The C-terminus forms an elongated spine to which L12 dimers bind in a sequential fashion forming a multimeric L10(L12)X complex.

Functionally, forms part of the ribosomal stalk, playing a central role in the interaction of the ribosome with GTP-bound translation factors. The chain is Large ribosomal subunit protein uL10 from Prochlorococcus marinus (strain SARG / CCMP1375 / SS120).